A 132-amino-acid chain; its full sequence is Small ribosomal subunit protein uS11 (132 aa).

This sequence belongs to the universal ribosomal protein uS11 family. In terms of assembly, part of the 30S ribosomal subunit. Interacts with proteins S7 and S18. Binds to IF-3.

Located on the platform of the 30S subunit, it bridges several disparate RNA helices of the 16S rRNA. Forms part of the Shine-Dalgarno cleft in the 70S ribosome. The polypeptide is Small ribosomal subunit protein uS11 (Oenococcus oeni (strain ATCC BAA-331 / PSU-1)).